The sequence spans 668 residues: UvrABC system protein C (668 aa).

Positions 14-91 (DSPGCYLHKD…IQRYKPKYNI (78 aa)) constitute a GIY-YIG domain. The UVR domain occupies 196–231 (KKIVNELEAKMMVSSDNMEFEQAAEYRDVIKAIGTL).

The protein belongs to the UvrC family. In terms of assembly, interacts with UvrB in an incision complex.

It is found in the cytoplasm. The UvrABC repair system catalyzes the recognition and processing of DNA lesions. UvrC both incises the 5' and 3' sides of the lesion. The N-terminal half is responsible for the 3' incision and the C-terminal half is responsible for the 5' incision. This Lactococcus lactis subsp. lactis (strain IL1403) (Streptococcus lactis) protein is UvrABC system protein C.